The chain runs to 492 residues: SH2 domain-containing adapter protein E (492 aa).

4 disordered regions span residues 46 to 193, 214 to 236, 260 to 332, and 347 to 384; these read TASE…DKAK, KRTK…EPYD, LDGP…EQPW, and FEGS…KVDP. S103 bears the Phosphoserine mark. Positions 149–158 are enriched in basic and acidic residues; that stretch reads IKVDTQEKNG. Over residues 168-184 the composition is skewed to low complexity; it reads TSSSSSSSSSASSSPSS. 5 stretches are compositionally biased toward basic and acidic residues: residues 214 to 227, 268 to 285, 306 to 332, 349 to 361, and 373 to 383; these read KRTK…RVGE, ETVK…KDLL, AEVK…EQPW, GSDR…DAGR, and LSDHGDGEKVD. Residues 393 to 488 form the SH2 domain; it reads WYHGSISRAE…AEHMTLLHPV (96 aa).

In terms of tissue distribution, expressed in heart, brain, lung and skeletal muscle.

This chain is SH2 domain-containing adapter protein E (She), found in Mus musculus (Mouse).